Reading from the N-terminus, the 257-residue chain is Adenosylcobinamide-GDP ribazoletransferase (257 aa).

6 helical membrane-spanning segments follow: residues 7-27 (QLTL…PTWV), 39-59 (RYFG…YEIT), 61-81 (GFLP…VVTG), 113-133 (IGTY…ILLS), 143-163 (VVTA…SLIF), and 196-216 (VLVL…GLVL).

It belongs to the CobS family. It depends on Mg(2+) as a cofactor.

The protein resides in the cell inner membrane. The enzyme catalyses alpha-ribazole + adenosylcob(III)inamide-GDP = adenosylcob(III)alamin + GMP + H(+). The catalysed reaction is alpha-ribazole 5'-phosphate + adenosylcob(III)inamide-GDP = adenosylcob(III)alamin 5'-phosphate + GMP + H(+). It functions in the pathway cofactor biosynthesis; adenosylcobalamin biosynthesis; adenosylcobalamin from cob(II)yrinate a,c-diamide: step 7/7. Its function is as follows. Joins adenosylcobinamide-GDP and alpha-ribazole to generate adenosylcobalamin (Ado-cobalamin). Also synthesizes adenosylcobalamin 5'-phosphate from adenosylcobinamide-GDP and alpha-ribazole 5'-phosphate. This Shewanella woodyi (strain ATCC 51908 / MS32) protein is Adenosylcobinamide-GDP ribazoletransferase.